The chain runs to 228 residues: Small ribosomal subunit protein uS3 (228 aa).

The KH type-2 domain maps to 39–107 (VREYLQDKLK…PVHINIEEIR (69 aa)).

The protein belongs to the universal ribosomal protein uS3 family. In terms of assembly, part of the 30S ribosomal subunit. Forms a tight complex with proteins S10 and S14.

Binds the lower part of the 30S subunit head. Binds mRNA in the 70S ribosome, positioning it for translation. In Pseudomonas syringae pv. syringae (strain B728a), this protein is Small ribosomal subunit protein uS3.